The primary structure comprises 5762 residues: Mucin-5B (5762 aa).

Positions 1 to 25 (MGAPSACRTLVLALAAMLVVPQAET) are cleaved as a signal peptide. Residues 27 to 50 (GPVEPSWENAGHTMDGGAPTSSPT) are disordered. The VWFD 1 domain occupies 75–245 (RVCSTWGDFH…KLDGPTEQCP (171 aa)). Intrachain disulfides connect Cys77–Cys207 and Cys99–Cys244. Asn145 carries N-linked (GlcNAc...) asparagine glycosylation. Glu194 serves as a coordination point for Cu(2+). Residues Asn201 and Asn254 are each glycosylated (N-linked (GlcNAc...) asparagine). 2 residues coordinate Cu(2+): His311 and His358. The region spanning 329–385 (CPLNMQHQECGSPCTDTCSNPQRAQLCEDHCVDGCFCPPGTVLDDITHSGCLPLGQC) is the TIL 1 domain. The N-linked (GlcNAc...) asparagine glycan is linked to Asn401. A VWFD 2 domain is found at 423–598 (GTCSVQGGAH…NTWKAQAACA (176 aa)). Disulfide bonds link Cys425–Cys562, Cys447–Cys597, and Cys469–Cys477. Asn515 is a glycosylation site (N-linked (GlcNAc...) asparagine). TIL domains are found at residues 695–752 (CPKS…AQEC) and 805–855 (NSSA…EEDC). The N-linked (GlcNAc...) asparagine glycan is linked to Asn805. In terms of domain architecture, VWFC 1 spans 855-927 (CPCVHNEATY…EYILAQDYCG (73 aa)). The VWFD 3 domain maps to 893-1062 (GTCVAYGDGH…NSWKLSPSCP (170 aa)). 4 cysteine pairs are disulfide-bonded: Cys895–Cys1026, Cys917–Cys1061, Cys926–Cys1023, and Cys944–Cys951. A glycan (N-linked (GlcNAc...) asparagine) is linked at Asn929. N-linked (GlcNAc...) asparagine glycosylation is found at Asn1276 and Asn1292. A Cys-rich subdomain 1 repeat occupies 1333-1432 (CVREVCRWSS…RVLCCEYVPC (100 aa)). A 7 X Cys-rich subdomain repeats region spans residues 1333–4228 (CVREVCRWSS…RVFCCNYGHC (2896 aa)). Trp1340 carries a C-linked (Man) tryptophan glycan. Disordered stretches follow at residues 1437-1462 (APGT…QTTA) and 1480-1502 (LTSQ…GTTT). Positions 1450–1462 (TEPAVPTPTQTTA) are enriched in low complexity. One copy of the Cys-rich subdomain 2 repeat lies at 1503–1604 (CQPRCQWTEW…VLCCSDDHCR (102 aa)). Residue Trp1509 is glycosylated (C-linked (Man) tryptophan). Asn1556 carries N-linked (GlcNAc...) asparagine glycosylation. The disordered stretch occupies residues 1607–1783 (ATTPPPTTEL…NTTTSQGTTR (177 aa)). The span at 1614-1624 (TELETATTTTT) shows a compositional bias: low complexity. Composition is skewed to polar residues over residues 1625-1638 (QALF…SSPG) and 1645-1662 (ASTT…SPRY). Over residues 1663–1684 (TSTLGTATTGGPTTPAGSTEPT) the composition is skewed to low complexity. Polar residues predominate over residues 1689-1706 (ATSTLPTRSALPGTTGSL). Composition is skewed to low complexity over residues 1739–1756 (EPLT…LSTS) and 1765–1777 (TETT…NTTT). N-linked (GlcNAc...) asparagine glycosylation occurs at Asn1774. Residues 1784–1885 (CQPKCEWTEW…VLCCDDYSHC (102 aa)) form a Cys-rich subdomain 3 repeat. Trp1790 carries C-linked (Man) tryptophan glycosylation. Over residues 1890–1987 (ATSSTATPSS…TSVTPIPSSS (98 aa)) the composition is skewed to low complexity. 4 disordered regions span residues 1890–2019 (ATSS…TAHT), 2031–2100 (GATG…GTTH), 2114–2211 (TGSM…HTVR), and 2242–2302 (TGTT…SSPT). The segment at 1890–2199 (ATSSTATPSS…VPNTMATTHG (310 aa)) is 11 X approximate tandem repeats, Ser/Thr-rich. Polar residues predominate over residues 1988–1997 (LGTTWTRLSQ). Low complexity predominate over residues 1998-2019 (TTTPTATMSTATPSSTPETAHT). Residues 2114–2181 (TGSMATPSSS…TSNTVTPSSA (68 aa)) show a composition bias toward low complexity. Positions 2182-2199 (LGTTHTPPVPNTMATTHG) are enriched in polar residues. A Cys-rich subdomain 4 repeat occupies 2313–2414 (GCEPQCAWSE…RVFCCNYGHC (102 aa)). Trp2320 is a glycosylation site (C-linked (Man) tryptophan). Positions 2419 to 2756 (ATSSTAMPSS…VPNTTATTHG (338 aa)) are 11 X approximate tandem repeats, Ser/Thr-rich. Disordered stretches follow at residues 2443-2462 (ATTT…PGTT), 2473-2522 (TVTV…ATAL), and 2556-2861 (TTPT…PTSA). Residues 2556-2738 (TTPTATMSTA…TSSTVTPSSA (183 aa)) show a composition bias toward low complexity. Over residues 2739-2786 (LGTTHTPPVPNTTATTHGRSLSPSSPHTVRTAWTSATSGTLGTTHITE) the composition is skewed to polar residues. A glycan (N-linked (GlcNAc...) asparagine) is linked at Asn2749. Residues 2787–2861 (PSTGTSHTPA…TLLPSSPTSA (75 aa)) are compositionally biased toward low complexity. An HAT 1 repeat occupies 2854–2886 (LPSSPTSAPITTVVTMGCEPQCAWSEWLDYSYP). The stretch at 2871 to 2971 (CEPQCAWSEW…RVFCCNYGHC (101 aa)) is one Cys-rich subdomain 5 repeat. A glycan (C-linked (Man) tryptophan) is linked at Trp2877. Residues 2976 to 3456 (ATSSTATPSS…VPNTTATTHG (481 aa)) form a 17 X approximate tandem repeats, Ser/Thr-rich region. Composition is skewed to low complexity over residues 3001–3017 (TTTA…STPG) and 3026–3049 (TSTA…RTAT). 4 disordered regions span residues 3001–3049 (TTTA…RTAT), 3256–3357 (TTPT…GTTH), 3371–3469 (TGSM…TVRT), and 3481–3561 (TTHI…PTSA). Low complexity predominate over residues 3371 to 3438 (TGSMATPSSS…TSSTVTPSSA (68 aa)). Residues 3439–3456 (LGTTHTPPVPNTTATTHG) show a composition bias toward polar residues. Asn3449 carries an N-linked (GlcNAc...) asparagine glycan. The segment covering 3487–3561 (PSTVTSHTPA…TLLPSSPTSA (75 aa)) has biased composition (low complexity). An HAT 2 repeat occupies 3554 to 3586 (LPSSPTSAPITTVVTTGCEPQCAWSEWLDYSYP). The Cys-rich subdomain 6 repeat unit spans residues 3571 to 3671 (CEPQCAWSEW…RVFCCNYGHC (101 aa)). A glycan (C-linked (Man) tryptophan) is linked at Trp3577. An 11 X approximate tandem repeats, Ser/Thr-rich region spans residues 3676–4013 (ATSSTATPSS…VPNTTATTHG (338 aa)). Disordered regions lie at residues 3699 to 3779 (TATT…ATAL), 3813 to 3917 (TTPT…HTPT), and 3956 to 4118 (ATGS…PTSA). Residues 3956 to 3995 (ATGSTTNPSSTPGTTPIPPVLTTTATTPAATSSTVTPSSA) show a composition bias toward low complexity. The segment covering 3996–4043 (LGTTHTPPVPNTTATTHGRSLSPSSPHTVRTAWTSATSGTLGTTHITE) has biased composition (polar residues). N-linked (GlcNAc...) asparagine glycosylation is present at Asn4006. A compositionally biased stretch (low complexity) spans 4044-4118 (PSTGTSHTPA…TLLPSSPTSA (75 aa)). The HAT 3 repeat unit spans residues 4111-4143 (LPSSPTSAPITTVVTTGCEPQCAWSEWLDYSYP). A Cys-rich subdomain 7 repeat occupies 4128–4228 (CEPQCAWSEW…RVFCCNYGHC (101 aa)). Trp4134 is a glycosylation site (C-linked (Man) tryptophan). The 23 X approximate tandem repeats, Ser/Thr-rich stretch occupies residues 4233 to 4879 (ATSSTAMPSS…TLGTAHTPKV (647 aa)). 2 stretches are compositionally biased toward low complexity: residues 4259–4274 (TTAS…STPG) and 4283–4389 (TSPA…PGTT). 4 disordered regions span residues 4259-4389 (TTAS…PGTT), 4428-4447 (ATTT…PGTT), 4458-4527 (TVTV…AIPS), and 4541-4750 (TTPT…ATSF). Asn4804, Asn4960, Asn5017, Asn5024, Asn5046, Asn5096, and Asn5111 each carry an N-linked (GlcNAc...) asparagine glycan. The region spanning 5073–5261 (CICSMWGGSH…VPDSRKDGCW (189 aa)) is the VWFD 4 domain. 3 cysteine pairs are disulfide-bonded: Cys5075–Cys5221, Cys5097–Cys5260, and Cys5121–Cys5132. N-linked (GlcNAc...) asparagine glycosylation occurs at Asn5215. The VWFC 2 domain occupies 5412–5484 (CPCVGPDGFP…NPCCPETVCV (73 aa)). 9 N-linked (GlcNAc...) asparagine glycosylation sites follow: Asn5486, Asn5526, Asn5565, Asn5566, Asn5602, Asn5612, Asn5663, Asn5677, and Asn5721. The region spanning 5521 to 5587 (QLCSYNGTFY…VAGQCCGECV (67 aa)) is the VWFC 3 domain. Cystine bridges form between Cys5653–Cys5705, Cys5672–Cys5719, Cys5681–Cys5735, and Cys5685–Cys5737. One can recognise a CTCK domain in the interval 5653-5742 (CEEDSCQVRI…DECGCTPFCV (90 aa)).

Homomultimer; disulfide-linked. The N- and C-terminus mediate their assembly into higher order structures to form filaments. The CTCK domains of two polypeptides associate in the endoplasmic reticulum to generate intermolecularly disulfide-bonded dimers. These dimers progress to the Golgi apparatus, which is a more acidic environment than the endoplasmic reticulum. Under acidic conditions, the N-termini form non-covalent intermolecular interactions that juxtapose assemblies from different CTCK-linked dimers to produce long, disulfide-linked polymers that remain highly compact until secretion. In terms of processing, highly glycosylated. C-, N- and O-glycosylated. C-mannosylated in the Cys-rich subdomains probably on the first Trp residue of the WXXW motif. Highly O-glycosylated in the Ser/Thr-rich tandem repeat (TR) region. The repeat region is about 59% O-glycosylated with a high abundance of NeuAc(2)Hex(1)HexNac1-ol. As to expression, expressed on surface airway epithelia. Expressed mainly in mucous cells of submucosal glands of airway tissues. Highly expressed in the sublingual gland. Also found in submaxillary glands, endocervix, gall bladder, and pancreas.

It localises to the secreted. In terms of biological role, gel-forming mucin that is thought to contribute to the lubricating and viscoelastic properties of whole saliva and cervical mucus. The sequence is that of Mucin-5B (MUC5B) from Homo sapiens (Human).